Consider the following 292-residue polypeptide: MIMMSPLYALTKQCVIDTAYRLAVPTQHCAIYTVACRILFLSVGFMTIVKLCGFKMDTSSFIASIEKDNLMDCLISLVEMRDRLRLCNDFPILNYGVNILELLIGKRLNKINNLKNCYVIRELITINISKEWVGKQALKVGLHCFLNLSQADSRHVKYLLSDKESLNKMNFSRYYVPKVVTDLYLDLIGVLYVNTGYNIDLVEKFIFDKLEFLVYDGEEGFKSPQVEYNDICTVNNLKPIIKYNRWHTDGSIVIECGDVIGKGINKTKKKFAINDAKAEFVKNFKAKNKNNE.

Residues 29-46 (CAIYTVACRILFLSVGFM) form a helical membrane-spanning segment. The tract at residues 219–292 (EGFKSPQVEY…NFKAKNKNNE (74 aa)) is RNA-binding.

The protein localises to the host endoplasmic reticulum membrane. Acts as a ssRNA-binding protein that may be involved in targeting RNA2 to replication sites or facilitating RNA2 replication. The polypeptide is RNA-binding P34 protein (Lettuce infectious yellows virus (isolate United States/92) (LIYV)).